Consider the following 122-residue polypeptide: Large ribosomal subunit protein eL18 (122 aa).

Belongs to the eukaryotic ribosomal protein eL18 family.

This is Large ribosomal subunit protein eL18 from Picrophilus torridus (strain ATCC 700027 / DSM 9790 / JCM 10055 / NBRC 100828 / KAW 2/3).